The sequence spans 445 residues: Exodeoxyribonuclease 7 large subunit (445 aa).

The protein belongs to the XseA family. In terms of assembly, heterooligomer composed of large and small subunits.

Its subcellular location is the cytoplasm. It catalyses the reaction Exonucleolytic cleavage in either 5'- to 3'- or 3'- to 5'-direction to yield nucleoside 5'-phosphates.. Its function is as follows. Bidirectionally degrades single-stranded DNA into large acid-insoluble oligonucleotides, which are then degraded further into small acid-soluble oligonucleotides. This chain is Exodeoxyribonuclease 7 large subunit, found in Staphylococcus epidermidis (strain ATCC 12228 / FDA PCI 1200).